Here is a 413-residue protein sequence, read N- to C-terminus: Serine hydroxymethyltransferase (413 aa).

Residues leucine 117 and 121 to 123 (GHL) each bind (6S)-5,6,7,8-tetrahydrofolate. Lysine 226 is modified (N6-(pyridoxal phosphate)lysine). (6S)-5,6,7,8-tetrahydrofolate contacts are provided by residues glutamate 241 and 349-351 (SPF).

The protein belongs to the SHMT family. In terms of assembly, homodimer. Pyridoxal 5'-phosphate serves as cofactor.

The protein resides in the cytoplasm. It carries out the reaction (6R)-5,10-methylene-5,6,7,8-tetrahydrofolate + glycine + H2O = (6S)-5,6,7,8-tetrahydrofolate + L-serine. Its pathway is one-carbon metabolism; tetrahydrofolate interconversion. The protein operates within amino-acid biosynthesis; glycine biosynthesis; glycine from L-serine: step 1/1. Functionally, catalyzes the reversible interconversion of serine and glycine with tetrahydrofolate (THF) serving as the one-carbon carrier. This reaction serves as the major source of one-carbon groups required for the biosynthesis of purines, thymidylate, methionine, and other important biomolecules. Also exhibits THF-independent aldolase activity toward beta-hydroxyamino acids, producing glycine and aldehydes, via a retro-aldol mechanism. In Halalkalibacterium halodurans (strain ATCC BAA-125 / DSM 18197 / FERM 7344 / JCM 9153 / C-125) (Bacillus halodurans), this protein is Serine hydroxymethyltransferase.